A 212-amino-acid chain; its full sequence is LexA repressor (212 aa).

The segment at residues Val-29–Glu-49 is a DNA-binding region (H-T-H motif). Active-site for autocatalytic cleavage activity residues include Ser-133 and Lys-171.

Belongs to the peptidase S24 family. As to quaternary structure, homodimer.

It carries out the reaction Hydrolysis of Ala-|-Gly bond in repressor LexA.. Represses a number of genes involved in the response to DNA damage (SOS response), including recA and lexA. In the presence of single-stranded DNA, RecA interacts with LexA causing an autocatalytic cleavage which disrupts the DNA-binding part of LexA, leading to derepression of the SOS regulon and eventually DNA repair. The polypeptide is LexA repressor (Leuconostoc mesenteroides subsp. mesenteroides (strain ATCC 8293 / DSM 20343 / BCRC 11652 / CCM 1803 / JCM 6124 / NCDO 523 / NBRC 100496 / NCIMB 8023 / NCTC 12954 / NRRL B-1118 / 37Y)).